Reading from the N-terminus, the 423-residue chain is Transcription factor IIIB 50 kDa subunit (423 aa).

A TFIIB-type zinc finger spans residues methionine 1–serine 34. Residues cysteine 5, cysteine 8, cysteine 26, and cysteine 29 each contribute to the Zn(2+) site. Repeat unit 2 spans residues leucine 171–lysine 245. Residues glutamine 325–serine 340 are compositionally biased toward low complexity. The segment at glutamine 325–leucine 358 is disordered. Position 373 is a cysteine sulfenic acid (-SOH) (cysteine 373).

This sequence belongs to the TFIIB family. In terms of assembly, component of TFIIIB complexes. Interacts with TBP and forms a ternary complex with TBp and target DNA sequences. Post-translationally, in response to oxidative stress, a Cys-residue is reversibly oxidized to cysteine sulfenic acid. This impairs formation of a ternary complex with TBP and DNA and down-regulates expression of target genes in response to oxidative stress.

Its subcellular location is the nucleus. General activator of RNA polymerase III transcription. Factor exclusively required for RNA polymerase III transcription of genes with promoter elements upstream of the initiation sites. Contributes to the regulation of gene expression; functions as activator in the absence of oxidative stress. Down-regulates expression of target genes in response to oxidative stress. Overexpression protects cells against apoptosis in response to oxidative stress. The sequence is that of Transcription factor IIIB 50 kDa subunit (brf2) from Danio rerio (Zebrafish).